A 319-amino-acid chain; its full sequence is uncharacterized protein (319 aa).

Positions 36-178 constitute an SIS domain; that stretch reads IIEFLLSFKG…MTVIHEERGF (143 aa). 51-56 contributes to the ATP binding site; it reads GIGKSG. CBS domains lie at 203 to 263 and 268 to 319; these read MRSG…HLKT and MTKN…MGVS.

It belongs to the SIS family. GutQ/KpsF subfamily.

This is an uncharacterized protein from Rickettsia prowazekii (strain Madrid E).